The sequence spans 510 residues: GMP synthase [glutamine-hydrolyzing] (510 aa).

Residues aspartate 5–threonine 194 form the Glutamine amidotransferase type-1 domain. Cysteine 82 serves as the catalytic Nucleophile. Active-site residues include histidine 169 and glutamate 171. The 191-residue stretch at tryptophan 195–arginine 385 folds into the GMPS ATP-PPase domain. Residue serine 222–serine 228 participates in ATP binding.

As to quaternary structure, homodimer.

The enzyme catalyses XMP + L-glutamine + ATP + H2O = GMP + L-glutamate + AMP + diphosphate + 2 H(+). It functions in the pathway purine metabolism; GMP biosynthesis; GMP from XMP (L-Gln route): step 1/1. Its function is as follows. Catalyzes the synthesis of GMP from XMP. The polypeptide is GMP synthase [glutamine-hydrolyzing] (Campylobacter fetus subsp. fetus (strain 82-40)).